We begin with the raw amino-acid sequence, 107 residues long: GNLWVGNEKMTMKNLNDRLASYLEKVRSLEQSNSKFELQIKQWYESNTPGISRDHSAYLQQIQDLRNQIRDAQLQNARCVLQIDNAKLAAEDFRLKYETERGIRLAV.

A head region spans residues 1–7 (GNLWVGN). Residues 8–43 (EKMTMKNLNDRLASYLEKVRSLEQSNSKFELQIKQW) are coil 1A. Residues 8 to 107 (EKMTMKNLND…ETERGIRLAV (100 aa)) form the IF rod domain. The tract at residues 44–61 (YESNTPGISRDHSAYLQQ) is linker 1. The segment at 62 to 107 (IQDLRNQIRDAQLQNARCVLQIDNAKLAAEDFRLKYETERGIRLAV) is coil 1B.

This sequence belongs to the intermediate filament family. As to quaternary structure, heterotetramer of two type I and two type II keratins. Associates with KRT8.

Its function is as follows. Plays a significant role in maintaining keratin filament organization in intestinal epithelia. When phosphorylated, plays a role in the secretion of mucin in the small intestine. This Sus scrofa (Pig) protein is Keratin, type I cytoskeletal 20.